The primary structure comprises 234 residues: Leucyl/phenylalanyl-tRNA--protein transferase (234 aa).

The protein belongs to the L/F-transferase family.

Its subcellular location is the cytoplasm. It carries out the reaction N-terminal L-lysyl-[protein] + L-leucyl-tRNA(Leu) = N-terminal L-leucyl-L-lysyl-[protein] + tRNA(Leu) + H(+). The catalysed reaction is N-terminal L-arginyl-[protein] + L-leucyl-tRNA(Leu) = N-terminal L-leucyl-L-arginyl-[protein] + tRNA(Leu) + H(+). The enzyme catalyses L-phenylalanyl-tRNA(Phe) + an N-terminal L-alpha-aminoacyl-[protein] = an N-terminal L-phenylalanyl-L-alpha-aminoacyl-[protein] + tRNA(Phe). Its function is as follows. Functions in the N-end rule pathway of protein degradation where it conjugates Leu, Phe and, less efficiently, Met from aminoacyl-tRNAs to the N-termini of proteins containing an N-terminal arginine or lysine. The chain is Leucyl/phenylalanyl-tRNA--protein transferase from Citrobacter koseri (strain ATCC BAA-895 / CDC 4225-83 / SGSC4696).